A 170-amino-acid polypeptide reads, in one-letter code: uncharacterized protein (170 aa).

Residues 1 to 15 (MFLTSPFESCIVLSS) are Cytoplasmic-facing. Residues 16–36 (LIAGLLFSLSTGFVGILGVFA) traverse the membrane as a helical segment. Topologically, residues 37–76 (SLFETELSVSPKRLSLSSLSWPKTFWALLSSVEGVSWESS) are extracellular. A helical transmembrane segment spans residues 77 to 97 (LFACIVGCCFAVTVIASLSAS). Over 98 to 119 (RVFGTVASSFRDSSCCCDSSPA) the chain is Cytoplasmic. Residues 120–140 (VSVLATPATAALALLSLLLSL) form a helical membrane-spanning segment. Over 141-170 (PCWSTSTEAFTVDPSPSVFSMLANRITIGL) the chain is Extracellular.

Its subcellular location is the membrane. This is an uncharacterized protein from Saccharomyces cerevisiae (strain ATCC 204508 / S288c) (Baker's yeast).